Reading from the N-terminus, the 339-residue chain is Uroporphyrinogen decarboxylase (339 aa).

Substrate-binding positions include 21–25 (RQAGR), D71, Y147, S202, and H315.

Belongs to the uroporphyrinogen decarboxylase family. Homodimer.

The protein localises to the cytoplasm. It carries out the reaction uroporphyrinogen III + 4 H(+) = coproporphyrinogen III + 4 CO2. Its pathway is porphyrin-containing compound metabolism; protoporphyrin-IX biosynthesis; coproporphyrinogen-III from 5-aminolevulinate: step 4/4. Functionally, catalyzes the decarboxylation of four acetate groups of uroporphyrinogen-III to yield coproporphyrinogen-III. This is Uroporphyrinogen decarboxylase from Helicobacter pylori (strain P12).